The primary structure comprises 365 residues: Class I histocompatibility antigen, Gogo-A*0401 alpha chain (365 aa).

Residues 1 to 24 form the signal peptide; the sequence is MAVMAPRTLVLLLSGALALTQTWA. Positions 25-114 are alpha-1; it reads GSHSMRYFYT…LRGYYNQSED (90 aa). Over 25-308 the chain is Extracellular; that stretch reads GSHSMRYFYT…EPSSQPTIPI (284 aa). N-linked (GlcNAc...) asparagine glycosylation is present at asparagine 110. Residues 115–206 are alpha-2; sequence GSHTIQRMYG…ENGKETLQLT (92 aa). Disulfide bonds link cysteine 125-cysteine 188 and cysteine 227-cysteine 283. Residues 207 to 298 are alpha-3; it reads DAPKTHMTHH…GLPKPLTLRW (92 aa). The Ig-like C1-type domain occupies 209-295; that stretch reads PKTHMTHHPV…QHEGLPKPLT (87 aa). Residues 299-308 form a connecting peptide region; the sequence is EPSSQPTIPI. The helical transmembrane segment at 309 to 332 threads the bilayer; sequence VGIIAGLVLFGAVIAGAVVAAVRW. The Cytoplasmic portion of the chain corresponds to 333–365; it reads RRKSSDRKGGSYSQAASSDSAQGSDVSLTACKV. The disordered stretch occupies residues 338 to 365; sequence DRKGGSYSQAASSDSAQGSDVSLTACKV. Positions 342–359 are enriched in low complexity; that stretch reads GSYSQAASSDSAQGSDVS. A Phosphoserine modification is found at serine 343. Tyrosine 344 carries the post-translational modification Phosphotyrosine. Serine 345, serine 349, serine 350, serine 352, serine 356, and serine 359 each carry phosphoserine.

This sequence belongs to the MHC class I family. As to quaternary structure, heterodimer of an alpha chain and a beta chain (beta-2-microglobulin).

It localises to the membrane. In terms of biological role, involved in the presentation of foreign antigens to the immune system. This is Class I histocompatibility antigen, Gogo-A*0401 alpha chain from Gorilla gorilla gorilla (Western lowland gorilla).